A 90-amino-acid polypeptide reads, in one-letter code: RNA-binding protein Hfq (90 aa).

Residues 9 to 68 (DPFLNALRRERVPVSIYLVNGIKLQGQVESFDQFVILLKNTVSQMVYKHAISTVVPARPF) form the Sm domain. The interval 71-90 (TGHQNAQGGYGPQDDVPSGE) is disordered.

Belongs to the Hfq family. In terms of assembly, homohexamer.

RNA chaperone that binds small regulatory RNA (sRNAs) and mRNAs to facilitate mRNA translational regulation in response to envelope stress, environmental stress and changes in metabolite concentrations. Also binds with high specificity to tRNAs. The polypeptide is RNA-binding protein Hfq (Shewanella putrefaciens (strain CN-32 / ATCC BAA-453)).